The primary structure comprises 34 residues: GDACSLLNGDDCGPGELCCTPSGDHQGTCETSCW.

Intrachain disulfides connect C4/C19, C12/C29, and C18/C33. 4-hydroxyproline occurs at positions 14 and 21.

Expressed by the venom duct.

It localises to the secreted. This is Conotoxin Cl6d from Californiconus californicus (California cone).